A 712-amino-acid polypeptide reads, in one-letter code: MQYSLLSAQLRCSRFLLRQQAPFINRCYSDDIRNIGILAHIDAGKTTTTERMLYYAGKTRSLGEVHRGNTVTDYLTQERERGITICSSAVTFAWNGKRINLLDTPGHIDFTMEVEQSLYAVDGVIVVLDGTAGVEAQTVTVWTQADNHRLPRLVFVNKMDRSDAIFDKCIDDLKAKLDAKPICTQLPAKNVDGQLGIYDVITLEQLTWQQNDFGRTYSINKLESSSEIRELREKRNELIDQLSGVDDELAEVVISTESFDKVSNELIVQALRRATCQQKVVPVLLGSAYKNIGIQRVMDAVNAYLPTPNERNQIYNCFGGELKRGMRVLSSRGQAEVISKIYEPLADEYREVSSVRAGDVAICAGLKSTVTGDLLTTSHTSLKNAQKRLIQSLDATSPQYDEDEVDVNQELFSIEPKIPDAVYFCSIEPPSLSTQTAMEQALKQLQREDPSLRVNYDTVTGQTVLGGMGELHMEIIKSRLLSEYKIDVDLGPLQIAYKEAIETPAITTLSVEKDIAGSKQNVNITLQLTNNQTELFSLDKSPENVQNLNALRPRVLQVLRKGAIGALERGPRVGGQVVDTQIRLHNVTVGRGTADSFVMAAAAQCVQKLLSKSGTRLLEPIMAMQIVAPNERVSGIIADLSRRRALIKDVMPKGDRNKLILVNAPLAELSGYSSALRTISSGTASMTMQPCGFSEMNAADETLAVRRAQGLD.

The N-terminal 28 residues, 1-28, are a transit peptide targeting the mitochondrion; it reads MQYSLLSAQLRCSRFLLRQQAPFINRCY. The tr-type G domain maps to 30–309; that stretch reads DDIRNIGILA…AVNAYLPTPN (280 aa). GTP contacts are provided by residues 39-46, 103-107, and 157-160; these read AHIDAGKT, DTPGH, and NKMD.

It belongs to the TRAFAC class translation factor GTPase superfamily. Classic translation factor GTPase family. EF-G/EF-2 subfamily.

It localises to the mitochondrion. Its function is as follows. Mitochondrial GTPase that mediates the disassembly of ribosomes from messenger RNA at the termination of mitochondrial protein biosynthesis. Not involved in the GTP-dependent ribosomal translocation step during translation elongation. In Drosophila virilis (Fruit fly), this protein is Ribosome-releasing factor 2, mitochondrial.